The sequence spans 144 residues: Putative pre-16S rRNA nuclease (144 aa).

It belongs to the YqgF nuclease family.

Its subcellular location is the cytoplasm. Its function is as follows. Could be a nuclease involved in processing of the 5'-end of pre-16S rRNA. This is Putative pre-16S rRNA nuclease from Symbiobacterium thermophilum (strain DSM 24528 / JCM 14929 / IAM 14863 / T).